The following is a 770-amino-acid chain: DEAD-box ATP-dependent RNA helicase 24 (770 aa).

The segment at 1-106 (MSKRPKLGGF…ADSDDEDDPV (106 aa)) is disordered. Polar residues predominate over residues 14-26 (RPTSYSFERSQPP). Residues 34 to 43 (DDPDLDDIAF) show a composition bias toward acidic residues. Low complexity predominate over residues 44-55 (SDDAAAPSDAPP). The short motif at 219-247 (KSFADCGFPVQLMNAIAKQGYEKPTTIQC) is the Q motif element. A Helicase ATP-binding domain is found at 250–425 (LPIVLSGRDI…REILTDPIRV (176 aa)). 263–270 (AKTGSGKT) contributes to the ATP binding site. The DEAD box motif lies at 373–376 (DEAD). The region spanning 436–599 (DIKQVVNVLP…DVPNELMDLA (164 aa)) is the Helicase C-terminal domain. The segment covering 604 to 613 (RFRANRDSRK) has biased composition (basic and acidic residues). Disordered regions lie at residues 604–640 (RFRA…RGRG), 683–704 (VSAS…PSSF), and 729–770 (LPAP…GWDR). The span at 621–635 (GKGGGGGGGGGSGAR) shows a compositional bias: gly residues. Low complexity predominate over residues 683–697 (VSASSSNTPSNSAPS). Over residues 744–753 (TVENANPNPE) the composition is skewed to polar residues. Over residues 754 to 770 (SSRDRTRERKRPSGWDR) the composition is skewed to basic and acidic residues.

It belongs to the DEAD box helicase family.

It carries out the reaction ATP + H2O = ADP + phosphate + H(+). This is DEAD-box ATP-dependent RNA helicase 24 from Oryza sativa subsp. japonica (Rice).